The sequence spans 234 residues: Probable chemoreceptor glutamine deamidase CheD 1 (234 aa).

It belongs to the CheD family.

It catalyses the reaction L-glutaminyl-[protein] + H2O = L-glutamyl-[protein] + NH4(+). Probably deamidates glutamine residues to glutamate on methyl-accepting chemotaxis receptors (MCPs), playing an important role in chemotaxis. The protein is Probable chemoreceptor glutamine deamidase CheD 1 of Albidiferax ferrireducens (strain ATCC BAA-621 / DSM 15236 / T118) (Rhodoferax ferrireducens).